A 400-amino-acid chain; its full sequence is Endoglucanase 5A (400 aa).

A signal peptide spans 1-26 (MKKITTIFVVLLMTVALFSIGNTTAA). Residues histidine 61, 65–66 (WY), tyrosine 92, and histidine 127 contribute to the substrate site. Glutamate 165 functions as the Proton donor in the catalytic mechanism. Tyrosine 228 is a substrate binding site. Glutamate 254 serves as the catalytic Nucleophile. Substrate is bound by residues 260–261 (AT), tryptophan 288, and 293–295 (KDE). Positions 328–363 (ESASIPPSDPTPPSDPGEPDPTPPSDPGEYPAWDPN) are disordered. The span at 334-353 (PSDPTPPSDPGEPDPTPPSD) shows a compositional bias: pro residues. The Chitin-binding type-3 domain maps to 357–396 (YPAWDPNQIYTNEIVYHNGQLWQAKWWTQNQEPGDPYGPW).

It belongs to the glycosyl hydrolase 5 (cellulase A) family. As to quaternary structure, monomer.

The protein localises to the secreted. The enzyme catalyses Endohydrolysis of (1-&gt;4)-beta-D-glucosidic linkages in cellulose, lichenin and cereal beta-D-glucans.. The protein is Endoglucanase 5A (cel5A) of Salipaludibacillus agaradhaerens (Bacillus agaradhaerens).